Consider the following 176-residue polypeptide: Prepronociceptin (176 aa).

The signal sequence occupies residues 1-19 (MKILFCDLLLLSLFSSVSS). 2 propeptides span residues 20-95 (SCQK…MQHL) and 169-176 (TLHQNGNA).

This sequence belongs to the opioid neuropeptide precursor family. Post-translationally, specific enzymatic cleavages at paired basic residues probably yield other active peptides besides nociceptin. The N-terminal domain contains 6 conserved cysteines thought to be involved in disulfide bonding and/or processing.

Its subcellular location is the secreted. Its function is as follows. Ligand of the opioid receptor-like receptor OPRL1. It may act as a transmitter in the brain by modulating nociceptive and locomotor behavior. May be involved in neuronal differentiation and development. Blocks nociceptin action in pain transmission by inhibiting nociceptin-induced hyperalgesia and allodynia. In terms of biological role, has potent analgesic activity. This chain is Prepronociceptin (PNOC), found in Bos taurus (Bovine).